The sequence spans 171 residues: Probable chemoreceptor glutamine deamidase CheD 1 (171 aa).

Residues 1–18 show a composition bias toward low complexity; the sequence is MTRTTGAAPDRAAPAAGE. The interval 1 to 23 is disordered; that stretch reads MTRTTGAAPDRAAPAAGETPGGG.

It belongs to the CheD family.

The enzyme catalyses L-glutaminyl-[protein] + H2O = L-glutamyl-[protein] + NH4(+). In terms of biological role, probably deamidates glutamine residues to glutamate on methyl-accepting chemotaxis receptors (MCPs), playing an important role in chemotaxis. This chain is Probable chemoreceptor glutamine deamidase CheD 1, found in Anaeromyxobacter dehalogenans (strain 2CP-C).